A 444-amino-acid polypeptide reads, in one-letter code: Viral protein kinase (444 aa).

Residues 1-25 (MRWKRMERRPPLTPLRRSRTQSSGG) are disordered. ATP contacts are provided by residues 90-98 (LGRGAFGII) and K108. The active-site Proton acceptor is the D201.

As to quaternary structure, interacts with protein K-bZIP/K8. Interacts with host beta-catenin/CTNNB1. In terms of processing, AUtophosphorylated.

It localises to the host nucleus. The catalysed reaction is L-seryl-[protein] + ATP = O-phospho-L-seryl-[protein] + ADP + H(+). The enzyme catalyses L-threonyl-[protein] + ATP = O-phospho-L-threonyl-[protein] + ADP + H(+). Its function is as follows. Serine/threonine protein kinase that plays a role in viral gene expression, viral DNA replication and encapsidation, and nuclear egress of virions. Regulates host transcriptional activity through interactions with RNA helicase and c-Jun N-terminal kinase (JNK) and viral transcriptional activity through interactions with the viral protein K-bZIP/K8. Induces host chromosome condensation and phosphorylation of histone H3. Phosphorylates the DNA polymerase processivity factor hence modulating its processivity function. Inhibits the host Wnt signaling pathway via direct interactions with beta-catenin/CTNNB1 while the kinase activity of vPK is not required for this inhibitory activity. Also phosphorylates host SAMHD1 and thereby counteracts its antiviral effect by reducing its dNTP hydrolase activity. The polypeptide is Viral protein kinase (vPK) (Human herpesvirus 8 type P (isolate GK18) (HHV-8)).